We begin with the raw amino-acid sequence, 144 residues long: Apidaecins type 22 (144 aa).

The first 19 residues, 1-19 (MKNFALAILVVTFVVAVFG), serve as a signal peptide directing secretion. Propeptides lie at residues 20 to 42 (NTNL…EAEP), 63 to 70 (EAEPEAEP), 91 to 98 (EAEPEAEP), and 119 to 126 (EAEPEAEP). The interval 20–144 (NTNLDPPTRP…PQPRPPHPRI (125 aa)) is disordered. Residues 134–144 (IPQPRPPHPRI) show a composition bias toward pro residues.

The protein belongs to the apidaecin family.

It localises to the secreted. In terms of biological role, apidaecins have bactericidal activity; predominantly against Gram-negative bacteria. They seem to interfere with cell propagation. In Apis mellifera (Honeybee), this protein is Apidaecins type 22.